A 374-amino-acid polypeptide reads, in one-letter code: DNA replication and repair protein RecF (374 aa).

34–41 (GNNGSGKT) is an ATP binding site.

It belongs to the RecF family.

The protein localises to the cytoplasm. In terms of biological role, the RecF protein is involved in DNA metabolism; it is required for DNA replication and normal SOS inducibility. RecF binds preferentially to single-stranded, linear DNA. It also seems to bind ATP. The sequence is that of DNA replication and repair protein RecF from Allorhizobium ampelinum (strain ATCC BAA-846 / DSM 112012 / S4) (Agrobacterium vitis (strain S4)).